Reading from the N-terminus, the 306-residue chain is Probable rRNA-processing protein EBP2 (306 aa).

Met1 carries the post-translational modification N-acetylmethionine. 2 disordered regions span residues 1–20 and 77–99; these read MDTPPLSDSESESDESLVTD and VPEIGGSEAPAPQNKDQKAVDPE. Phosphothreonine is present on Thr3. Phosphoserine occurs at positions 7, 9, 11, 13, and 16. Residue Lys94 forms a Glycyl lysine isopeptide (Lys-Gly) (interchain with G-Cter in SUMO2) linkage. Residues 138-169 adopt a coiled-coil conformation; the sequence is AEMAKSDLQMQKIRQKLQTKQAAMERSEKAKQ. Glycyl lysine isopeptide (Lys-Gly) (interchain with G-Cter in SUMO2) cross-links involve residues Lys179 and Lys218. A disordered region spans residues 213–306; it reads LEGDQKPLAQ…TREKMKNRTH (94 aa). Phosphoserine occurs at positions 264 and 270. Over residues 274–306 the composition is skewed to basic residues; it reads KTAHGRGLKRPGKKGSNKRPGKRTREKMKNRTH.

This sequence belongs to the EBP2 family. As to quaternary structure, specifically interacts with EBV EBNA1. The EBNA1-EBP2 interaction is important for the stable segregation of EBV episomes during cell division. Interacts with WDR46. As to expression, ubiquitous.

The protein resides in the nucleus. The protein localises to the nucleolus. Functionally, required for the processing of the 27S pre-rRNA. In Homo sapiens (Human), this protein is Probable rRNA-processing protein EBP2 (EBNA1BP2).